A 173-amino-acid chain; its full sequence is Photosystem I assembly protein Ycf3 (173 aa).

TPR repeat units follow at residues alanine 35–alanine 68, glycine 72–glutamine 105, and glycine 120–glycine 153.

Belongs to the Ycf3 family.

The protein localises to the cellular thylakoid membrane. Its function is as follows. Essential for the assembly of the photosystem I (PSI) complex. May act as a chaperone-like factor to guide the assembly of the PSI subunits. The sequence is that of Photosystem I assembly protein Ycf3 from Prochlorococcus marinus (strain SARG / CCMP1375 / SS120).